The chain runs to 481 residues: Glutamate--glyoxylate aminotransferase 1 (481 aa).

At K291 the chain carries N6-(pyridoxal phosphate)lysine. A Peroxisomal targeting signal motif is present at residues 479 to 481 (SKM).

Belongs to the class-I pyridoxal-phosphate-dependent aminotransferase family. Alanine aminotransferase subfamily. Homodimer. Requires pyridoxal 5'-phosphate as cofactor. In terms of processing, the N-terminus is blocked. As to expression, mostly expressed in leaves, and, to a lower extent, in shoots, stems, flowers, seedlings and green siliques.

Its subcellular location is the peroxisome. It carries out the reaction L-alanine + 2-oxoglutarate = pyruvate + L-glutamate. The catalysed reaction is glyoxylate + L-alanine = glycine + pyruvate. The enzyme catalyses glycine + 2-oxoglutarate = glyoxylate + L-glutamate. It participates in amino-acid biosynthesis; glycine biosynthesis; glycine from glyoxylate: step 1/1. Its pathway is photosynthesis; C4 acid pathway. It functions in the pathway amino-acid degradation; L-alanine degradation via transaminase pathway; pyruvate from L-alanine: step 1/1. In terms of biological role, catalyzes the glutamate:glyoxylate (GGT or GGAT), alanine:glyoxylate (AGT), alanine:2-oxoglutarate (AKT) and glutamate:pyruvate (GPT) aminotransferase reactions in peroxisomes. Required for abscisic acid (ABA)- and stress-mediated responses in an H(2)O(2)-dependent manner. Functions as a photorespiratory aminotransferase that modulates amino acid content during photorespiration (GGAT activity); promotes serine, glycine and citrulline metabolism in response to light. This chain is Glutamate--glyoxylate aminotransferase 1 (GGAT1), found in Arabidopsis thaliana (Mouse-ear cress).